A 500-amino-acid chain; its full sequence is ADP,ATP carrier protein 5 (500 aa).

11 consecutive transmembrane segments (helical) span residues 26–46 (LGKF…QNIL), 62–82 (IAGF…VIIY), 94–114 (IFYY…FVIY), 149–169 (YIVY…LLFW), 184–204 (FYTL…FLMM), 224–244 (ITLV…CCLL), 287–307 (LWLL…VEAV), 328–348 (LYIL…NNVM), 357–377 (AVIS…LIVF), 381–401 (ILSL…VSIG), and 469–489 (SISP…IYAV).

The protein belongs to the ADP/ATP translocase tlc family.

Its subcellular location is the cell membrane. In terms of biological role, provides the rickettsial cell with host ATP in exchange for rickettsial ADP. This is an obligate exchange system. This energy acquiring activity is an important component of rickettsial parasitism. The polypeptide is ADP,ATP carrier protein 5 (tlcE) (Rickettsia typhi (strain ATCC VR-144 / Wilmington)).